The sequence spans 369 residues: 5-amino-6-(D-ribitylamino)uracil--L-tyrosine 4-hydroxyphenyl transferase (369 aa).

The Radical SAM core domain occupies 56–292 (VTFVVNRNIN…AVARLYFGPL (237 aa)). The [4Fe-4S] cluster site is built by Cys-70, Cys-74, and Cys-77.

Belongs to the radical SAM superfamily. CofH family. As to quaternary structure, consists of two subunits, CofG and CofH. The cofactor is [4Fe-4S] cluster.

The enzyme catalyses 5-amino-6-(D-ribitylamino)uracil + L-tyrosine + S-adenosyl-L-methionine = 5-amino-5-(4-hydroxybenzyl)-6-(D-ribitylimino)-5,6-dihydrouracil + 2-iminoacetate + 5'-deoxyadenosine + L-methionine + H(+). The protein operates within cofactor biosynthesis; coenzyme F0 biosynthesis. Catalyzes the radical-mediated synthesis of 5-amino-5-(4-hydroxybenzyl)-6-(D-ribitylimino)-5,6-dihydrouracil from 5-amino-6-(D-ribitylamino)uracil and L-tyrosine. This chain is 5-amino-6-(D-ribitylamino)uracil--L-tyrosine 4-hydroxyphenyl transferase, found in Methanopyrus kandleri (strain AV19 / DSM 6324 / JCM 9639 / NBRC 100938).